We begin with the raw amino-acid sequence, 247 residues long: Ribonuclease 3 (247 aa).

In terms of domain architecture, RNase III spans 21-149 (LQKLSKKIGI…LVGAIYLDQG (129 aa)). Glutamate 62 is a Mg(2+) binding site. Aspartate 66 is a catalytic residue. Mg(2+)-binding residues include asparagine 135 and glutamate 138. Residue glutamate 138 is part of the active site. A DRBM domain is found at 176–245 (DYKTQLQEYS…AKELYNRIRK (70 aa)).

Belongs to the ribonuclease III family. As to quaternary structure, homodimer. The cofactor is Mg(2+).

The protein localises to the cytoplasm. It carries out the reaction Endonucleolytic cleavage to 5'-phosphomonoester.. Functionally, digests double-stranded RNA. Involved in the processing of primary rRNA transcript to yield the immediate precursors to the large and small rRNAs (23S and 16S). Processes some mRNAs, and tRNAs when they are encoded in the rRNA operon. Processes pre-crRNA and tracrRNA of type II CRISPR loci if present in the organism. In Leptospira interrogans serogroup Icterohaemorrhagiae serovar copenhageni (strain Fiocruz L1-130), this protein is Ribonuclease 3.